The sequence spans 639 residues: Threonine--tRNA ligase (639 aa).

The TGS domain maps to 1–61; it reads MATVRLPDGK…DGGGELEFVT (61 aa). The segment at 239–536 is catalytic; sequence DHRRLGRELG…LIEHYAGAFP (298 aa). Residues Cys333, His384, and His513 each contribute to the Zn(2+) site.

It belongs to the class-II aminoacyl-tRNA synthetase family. As to quaternary structure, homodimer. Zn(2+) serves as cofactor.

It localises to the cytoplasm. It catalyses the reaction tRNA(Thr) + L-threonine + ATP = L-threonyl-tRNA(Thr) + AMP + diphosphate + H(+). Catalyzes the attachment of threonine to tRNA(Thr) in a two-step reaction: L-threonine is first activated by ATP to form Thr-AMP and then transferred to the acceptor end of tRNA(Thr). Also edits incorrectly charged L-seryl-tRNA(Thr). This Rubrobacter xylanophilus (strain DSM 9941 / JCM 11954 / NBRC 16129 / PRD-1) protein is Threonine--tRNA ligase.